The primary structure comprises 297 residues: uncharacterized protein (297 aa).

The interval 46 to 229 is disordered; that stretch reads LGAGGPPPPP…RPPPYIAPPP (184 aa). Over residues 65-81 the composition is skewed to pro residues; the sequence is PEGPGGPPQHAPPNPPP. Residues 90–100 show a composition bias toward gly residues; that stretch reads RGGGAGGAGDG. Over residues 106 to 117 the composition is skewed to acidic residues; it reads DAAEEYGPEDLD. The span at 137 to 151 shows a compositional bias: basic residues; sequence HQTRGPGRRAKKRLR. A compositionally biased stretch (low complexity) spans 184 to 201; sequence ATPQAAPAAKTTPASPQT. Pro residues predominate over residues 219–229; that stretch reads HRPPPYIAPPP.

This is an uncharacterized protein from Torque teno virus (isolate Human/China/CT23F/2001) (TTV).